Here is a 155-residue protein sequence, read N- to C-terminus: Deoxyuridine 5'-triphosphate nucleotidohydrolase (155 aa).

Substrate contacts are provided by residues 74–76, Asn87, and 91–93; these read RSG and TID.

Belongs to the dUTPase family. Mg(2+) serves as cofactor.

It carries out the reaction dUTP + H2O = dUMP + diphosphate + H(+). It functions in the pathway pyrimidine metabolism; dUMP biosynthesis; dUMP from dCTP (dUTP route): step 2/2. This enzyme is involved in nucleotide metabolism: it produces dUMP, the immediate precursor of thymidine nucleotides and it decreases the intracellular concentration of dUTP so that uracil cannot be incorporated into DNA. This Dinoroseobacter shibae (strain DSM 16493 / NCIMB 14021 / DFL 12) protein is Deoxyuridine 5'-triphosphate nucleotidohydrolase.